A 294-amino-acid chain; its full sequence is Nucleotide-binding protein Cbei_4857 (294 aa).

8-15 lines the ATP pocket; the sequence is GLSGAGKT. 59–62 is a binding site for GTP; the sequence is DIRG.

The protein belongs to the RapZ-like family.

Functionally, displays ATPase and GTPase activities. The sequence is that of Nucleotide-binding protein Cbei_4857 from Clostridium beijerinckii (strain ATCC 51743 / NCIMB 8052) (Clostridium acetobutylicum).